A 118-amino-acid polypeptide reads, in one-letter code: Basic phospholipase A2 nigroxin A (118 aa).

Intrachain disulfides connect cysteine 11–cysteine 70, cysteine 25–cysteine 117, cysteine 27–cysteine 43, cysteine 42–cysteine 98, cysteine 49–cysteine 91, cysteine 59–cysteine 84, and cysteine 77–cysteine 89. Residues tyrosine 26, glycine 28, and glycine 30 each contribute to the Ca(2+) site. Histidine 46 is an active-site residue. Residue aspartate 47 coordinates Ca(2+). Aspartate 92 is an active-site residue.

Belongs to the phospholipase A2 family. Group I subfamily. D49 sub-subfamily. Requires Ca(2+) as cofactor. Expressed by the venom gland.

The protein resides in the secreted. The catalysed reaction is a 1,2-diacyl-sn-glycero-3-phosphocholine + H2O = a 1-acyl-sn-glycero-3-phosphocholine + a fatty acid + H(+). Functionally, snake venom phospholipase A2 (PLA2) that has only a weak enzymatic activity. It has a myotoxic activity in vivo (dystrophic effect). PLA2 catalyzes the calcium-dependent hydrolysis of the 2-acyl groups in 3-sn-phosphoglycerides. The protein is Basic phospholipase A2 nigroxin A of Micrurus nigrocinctus (Central American coral snake).